A 204-amino-acid chain; its full sequence is CASP-like protein 3A1 (204 aa).

At 1 to 39 the chain is on the cytoplasmic side; it reads MGSIGNGRNGSEVGIQIPAMGNKEVLERPAIPRWPRLGV. The chain crosses the membrane as a helical span at residues 40 to 60; that stretch reads VMVATRAVALVMAVLSMALMI. The Extracellular portion of the chain corresponds to 61–88; it reads SAKQRGSLKIFGIEIPLYANWSFSDSLE. N-linked (GlcNAc...) asparagine glycosylation occurs at Asn-80. The helical transmembrane segment at 89–109 threads the bilayer; it reads YLVGMSAVSAAYCLAQLLLTA. Residues 110–124 lie on the Cytoplasmic side of the membrane; that stretch reads HKAVKNAPVVQSRNY. Residues 125-145 traverse the membrane as a helical segment; it reads AWLLFTGDQIFAYAMMSAGSA. The Extracellular segment spans residues 146 to 179; it reads AAAVANLNRTGIRHTALPNFCKPLPRFCDLSAAS. N-linked (GlcNAc...) asparagine glycosylation occurs at Asn-153. The chain crosses the membrane as a helical span at residues 180–200; it reads IACAFLSCIFLAASAVIDVIW. Over 201–204 the chain is Cytoplasmic; the sequence is LSNM.

Belongs to the Casparian strip membrane proteins (CASP) family. Homodimer and heterodimers.

It localises to the cell membrane. This Oryza sativa subsp. indica (Rice) protein is CASP-like protein 3A1.